A 159-amino-acid polypeptide reads, in one-letter code: Small ribosomal subunit protein uS9 (159 aa).

This sequence belongs to the universal ribosomal protein uS9 family.

The chain is Small ribosomal subunit protein uS9 from Methylocella silvestris (strain DSM 15510 / CIP 108128 / LMG 27833 / NCIMB 13906 / BL2).